A 176-amino-acid polypeptide reads, in one-letter code: Cytochrome b (176 aa).

A run of 3 helical transmembrane segments spans residues 33-53, 77-98, and 113-133; these read FGSL…FLAM, WILR…YLHV, and WNIG…GYVL. 2 residues coordinate heme b: H83 and H97.

The protein belongs to the cytochrome b family. As to quaternary structure, the cytochrome bc1 complex contains 11 subunits: 3 respiratory subunits (MT-CYB, CYC1 and UQCRFS1), 2 core proteins (UQCRC1 and UQCRC2) and 6 low-molecular weight proteins (UQCRH/QCR6, UQCRB/QCR7, UQCRQ/QCR8, UQCR10/QCR9, UQCR11/QCR10 and a cleavage product of UQCRFS1). This cytochrome bc1 complex then forms a dimer. Heme b serves as cofactor.

It localises to the mitochondrion inner membrane. In terms of biological role, component of the ubiquinol-cytochrome c reductase complex (complex III or cytochrome b-c1 complex) that is part of the mitochondrial respiratory chain. The b-c1 complex mediates electron transfer from ubiquinol to cytochrome c. Contributes to the generation of a proton gradient across the mitochondrial membrane that is then used for ATP synthesis. The protein is Cytochrome b (MT-CYB) of Myotis leibii (Eastern small-footed myotis).